We begin with the raw amino-acid sequence, 257 residues long: Tryptophan synthase alpha chain (257 aa).

Catalysis depends on proton acceptor residues Glu-47 and Asp-58.

This sequence belongs to the TrpA family. Tetramer of two alpha and two beta chains.

It catalyses the reaction (1S,2R)-1-C-(indol-3-yl)glycerol 3-phosphate + L-serine = D-glyceraldehyde 3-phosphate + L-tryptophan + H2O. It functions in the pathway amino-acid biosynthesis; L-tryptophan biosynthesis; L-tryptophan from chorismate: step 5/5. In terms of biological role, the alpha subunit is responsible for the aldol cleavage of indoleglycerol phosphate to indole and glyceraldehyde 3-phosphate. The chain is Tryptophan synthase alpha chain from Listeria monocytogenes serotype 4b (strain F2365).